A 396-amino-acid polypeptide reads, in one-letter code: Large ribosomal subunit protein uL24m (396 aa).

The interval Gln374 to Val396 is disordered. The span at Ala384–Val396 shows a compositional bias: polar residues.

The protein belongs to the universal ribosomal protein uL24 family. As to quaternary structure, component of the mitochondrial large ribosomal subunit (mt-LSU). Mature N.crassa 74S mitochondrial ribosomes consist of a small (37S) and a large (54S) subunit. The 37S small subunit contains a 16S ribosomal RNA (16S mt-rRNA) and 32 different proteins. The 54S large subunit contains a 23S rRNA (23S mt-rRNA) and 42 different proteins. uL24m forms the wall of the exit tunnel.

It is found in the mitochondrion. Functionally, component of the mitochondrial ribosome (mitoribosome), a dedicated translation machinery responsible for the synthesis of mitochondrial genome-encoded proteins, including at least some of the essential transmembrane subunits of the mitochondrial respiratory chain. The mitoribosomes are attached to the mitochondrial inner membrane and translation products are cotranslationally integrated into the membrane. The polypeptide is Large ribosomal subunit protein uL24m (mrpl40) (Neurospora crassa (strain ATCC 24698 / 74-OR23-1A / CBS 708.71 / DSM 1257 / FGSC 987)).